A 322-amino-acid chain; its full sequence is MLNSFKLSLQYILPKLWLTRLAGWGASKRAGWLTKLVIDLFVKYYKVDMTEAQKPDTASYRTFNDFFVRPLRDDVRPLNTDPNILVMPADGVISQLGRIEEDKILQAKGHNYSLEALLAGNYLMADKFRNGTFVTTYLSPRDYHRVHMPCNGILREMIYVPGDLFSVNHLTAQNVPNLFARNERVICLFDTEFGPMAQILVGATIVGSIETVWAGTITPPREGIIKRWTWPEGEHEGSVALLKGQEMGRFKLGSTVINLFAPGKVNLIASLASLSVTKIGQPLATSTETFVAPEVEPAPLPAEEIKAEHDASPLVDNKKDDT.

Catalysis depends on charge relay system; for autoendoproteolytic cleavage activity residues Asp90, His147, and Ser254. Catalysis depends on Ser254, which acts as the Schiff-base intermediate with substrate; via pyruvic acid; for decarboxylase activity. Ser254 is subject to Pyruvic acid (Ser); by autocatalysis. A disordered region spans residues 296–322 (EPAPLPAEEIKAEHDASPLVDNKKDDT). Residues 303–322 (EEIKAEHDASPLVDNKKDDT) are compositionally biased toward basic and acidic residues.

This sequence belongs to the phosphatidylserine decarboxylase family. PSD-B subfamily. Prokaryotic type I sub-subfamily. In terms of assembly, heterodimer of a large membrane-associated beta subunit and a small pyruvoyl-containing alpha subunit. Pyruvate is required as a cofactor. Is synthesized initially as an inactive proenzyme. Formation of the active enzyme involves a self-maturation process in which the active site pyruvoyl group is generated from an internal serine residue via an autocatalytic post-translational modification. Two non-identical subunits are generated from the proenzyme in this reaction, and the pyruvate is formed at the N-terminus of the alpha chain, which is derived from the carboxyl end of the proenzyme. The autoendoproteolytic cleavage occurs by a canonical serine protease mechanism, in which the side chain hydroxyl group of the serine supplies its oxygen atom to form the C-terminus of the beta chain, while the remainder of the serine residue undergoes an oxidative deamination to produce ammonia and the pyruvoyl prosthetic group on the alpha chain. During this reaction, the Ser that is part of the protease active site of the proenzyme becomes the pyruvoyl prosthetic group, which constitutes an essential element of the active site of the mature decarboxylase.

It is found in the cell membrane. The enzyme catalyses a 1,2-diacyl-sn-glycero-3-phospho-L-serine + H(+) = a 1,2-diacyl-sn-glycero-3-phosphoethanolamine + CO2. The protein operates within phospholipid metabolism; phosphatidylethanolamine biosynthesis; phosphatidylethanolamine from CDP-diacylglycerol: step 2/2. In terms of biological role, catalyzes the formation of phosphatidylethanolamine (PtdEtn) from phosphatidylserine (PtdSer). The protein is Phosphatidylserine decarboxylase proenzyme of Salmonella dublin (strain CT_02021853).